The sequence spans 428 residues: Adenylosuccinate synthetase (428 aa).

GTP-binding positions include 12–18 (GDEGKGK) and 40–42 (GHT). Asp13 (proton acceptor) is an active-site residue. Mg(2+)-binding residues include Asp13 and Gly40. IMP is bound by residues 13-16 (DEGK), 38-41 (NAGH), Thr129, Arg143, Gln224, Thr239, and Arg303. Residue His41 is the Proton donor of the active site. Residue 299-305 (VTTGRIR) participates in substrate binding. GTP-binding positions include Arg305, 331-333 (KVD), and 410-412 (AYG).

This sequence belongs to the adenylosuccinate synthetase family. In terms of assembly, homodimer. It depends on Mg(2+) as a cofactor.

The protein localises to the cytoplasm. It catalyses the reaction IMP + L-aspartate + GTP = N(6)-(1,2-dicarboxyethyl)-AMP + GDP + phosphate + 2 H(+). It participates in purine metabolism; AMP biosynthesis via de novo pathway; AMP from IMP: step 1/2. In terms of biological role, plays an important role in the de novo pathway of purine nucleotide biosynthesis. Catalyzes the first committed step in the biosynthesis of AMP from IMP. The sequence is that of Adenylosuccinate synthetase from Francisella tularensis subsp. holarctica (strain FTNF002-00 / FTA).